A 439-amino-acid chain; its full sequence is Coiled-coil domain-containing protein 166 (439 aa).

The segment at 1–28 is disordered; that stretch reads MAPKKKRGPSAGSQPGGAAAAGAEQPLS. A compositionally biased stretch (low complexity) spans 9 to 23; it reads PSAGSQPGGAAAAGA. Coiled-coil stretches lie at residues 27–74 and 121–213; these read LSER…EENR and DGVR…VRAL. The segment at 276 to 439 is disordered; it reads PGGPPLWERP…AAAEASPGRA (164 aa). Polar residues predominate over residues 338 to 365; that stretch reads VLSSMDSRVPSLATSKVGSRMPSLTASR. 2 stretches are compositionally biased toward low complexity: residues 376-392 and 428-439; these read SLEGSGISSGSSPRVSS and AEAAAEASPGRA.

The chain is Coiled-coil domain-containing protein 166 (CCDC166) from Homo sapiens (Human).